Reading from the N-terminus, the 617-residue chain is Vacuolar protein sorting-associated protein 33B (617 aa).

N-acetylalanine is present on A2.

The protein belongs to the STXBP/unc-18/SEC1 family. In terms of assembly, interacts with RAB11A and VIPAS39. Associates with adapter protein complex 3 (AP-3), clathrin:AP-3 and clathrin:HGS complexes. Post-translationally, phosphorylated on tyrosine residues.

The protein resides in the late endosome membrane. The protein localises to the lysosome membrane. It is found in the early endosome. It localises to the cytoplasmic vesicle. Its subcellular location is the clathrin-coated vesicle. The protein resides in the recycling endosome. Its function is as follows. May play a role in vesicle-mediated protein trafficking to lysosomal compartments and in membrane docking/fusion reactions of late endosomes/lysosomes. Required for proper trafficking and targeting of the collagen-modifying enzyme lysyl hydroxylase 3 (LH3) to intracellular collagen. Mediates phagolysosomal fusion in macrophages. Proposed to be involved in endosomal maturation implicating in part VIPAS39. In epithelial cells, the VPS33B:VIPAS39 complex may play a role in the apical RAB11A-dependentrecycling pathway and in the maintenance of the apical-basolateral polarity. Seems to be involved in the sorting of specific cargos from the trans-Golgi network to alpha-granule-destined multivesicular bodies (MVBs) promoting MVBs maturation in megakaryocytes. The chain is Vacuolar protein sorting-associated protein 33B (Vps33b) from Mus musculus (Mouse).